Reading from the N-terminus, the 194-residue chain is Threonylcarbamoyl-AMP synthase (194 aa).

Residues 11-194 (FRNLMKIINA…GINYKIIRKG (184 aa)) enclose the YrdC-like domain.

It belongs to the SUA5 family. TsaC subfamily.

It localises to the cytoplasm. It catalyses the reaction L-threonine + hydrogencarbonate + ATP = L-threonylcarbamoyladenylate + diphosphate + H2O. Functionally, required for the formation of a threonylcarbamoyl group on adenosine at position 37 (t(6)A37) in tRNAs that read codons beginning with adenine. Catalyzes the conversion of L-threonine, HCO(3)(-)/CO(2) and ATP to give threonylcarbamoyl-AMP (TC-AMP) as the acyladenylate intermediate, with the release of diphosphate. In Wigglesworthia glossinidia brevipalpis, this protein is Threonylcarbamoyl-AMP synthase.